The sequence spans 229 residues: 2-phytyl-1,4-naphtoquinone methyltransferase (229 aa).

Belongs to the class I-like SAM-binding methyltransferase superfamily. MenG/UbiE family.

The enzyme catalyses demethylphylloquinol + S-adenosyl-L-methionine = phylloquinol + S-adenosyl-L-homocysteine + H(+). The protein operates within cofactor biosynthesis; phylloquinone biosynthesis. In terms of biological role, methyltransferase required for the conversion of 2-phytyl-1,4-beta-naphthoquinol to phylloquinol. The polypeptide is 2-phytyl-1,4-naphtoquinone methyltransferase (Nostoc sp. (strain PCC 7120 / SAG 25.82 / UTEX 2576)).